The primary structure comprises 109 residues: Envelope small membrane protein (109 aa).

The Virion surface portion of the chain corresponds to 1-11 (MTNLLNKSLEE). Residues 12 to 32 (NGSFLTAVYIFVGFVALYLLG) traverse the membrane as a helical segment. Over 33–109 (RALQAFVQAA…QDVQRNKLYS (77 aa)) the chain is Intravirion. Residues 89 to 109 (NGWNNKNPANFQDVQRNKLYS) are disordered. A compositionally biased stretch (polar residues) spans 90 to 109 (GWNNKNPANFQDVQRNKLYS).

This sequence belongs to the gammacoronaviruses E protein family. Homooligomer. Interacts with the M membrane protein in the budding compartment of the host cell, which is located between endoplasmic reticulum and the Golgi complex. The cytoplasmic tails of both proteins are important for this function. Interacts with Nucleoprotein.

Its subcellular location is the host Golgi apparatus membrane. Its function is as follows. Plays a central role in virus morphogenesis and assembly. Acts as a viroporin and self-assembles in host membranes forming pentameric protein-lipid pores that allow ion transport. Also plays a role in the induction of apoptosis. This Avian infectious bronchitis virus (strain KB8523) (IBV) protein is Envelope small membrane protein.